The primary structure comprises 279 residues: Fatty acid metabolism regulator protein (279 aa).

Residues 6–74 (KSPAGFAEKY…HGKPTKVNQF (69 aa)) enclose the HTH gntR-type domain. A DNA-binding region (H-T-H motif) is located at residues 34–53 (ERELSELIGVTRTTLREVLQ).

As to quaternary structure, homodimer.

The protein resides in the cytoplasm. Functionally, multifunctional regulator of fatty acid metabolism. The protein is Fatty acid metabolism regulator protein of Vibrio vulnificus (strain CMCP6).